A 947-amino-acid polypeptide reads, in one-letter code: Isoleucine--tRNA ligase (947 aa).

The short motif at 57–67 is the 'HIGH' region element; that stretch reads PYANGNIHLGH. Position 568 (Glu-568) interacts with L-isoleucyl-5'-AMP. Residues 609-613 carry the 'KMSKS' region motif; the sequence is KMSKS. Lys-612 contributes to the ATP binding site. Zn(2+)-binding residues include Cys-908, Cys-911, Cys-926, and Cys-929.

It belongs to the class-I aminoacyl-tRNA synthetase family. IleS type 1 subfamily. As to quaternary structure, monomer. The cofactor is Zn(2+).

It is found in the cytoplasm. The catalysed reaction is tRNA(Ile) + L-isoleucine + ATP = L-isoleucyl-tRNA(Ile) + AMP + diphosphate. In terms of biological role, catalyzes the attachment of isoleucine to tRNA(Ile). As IleRS can inadvertently accommodate and process structurally similar amino acids such as valine, to avoid such errors it has two additional distinct tRNA(Ile)-dependent editing activities. One activity is designated as 'pretransfer' editing and involves the hydrolysis of activated Val-AMP. The other activity is designated 'posttransfer' editing and involves deacylation of mischarged Val-tRNA(Ile). In Persephonella marina (strain DSM 14350 / EX-H1), this protein is Isoleucine--tRNA ligase.